Here is a 182-residue protein sequence, read N- to C-terminus: MTTIVSVRRKGHVVIGGDGQATLGNTVMKGNVRKVRRLYNDKVIAGFAGGTADAFTLFELFERKLEVHQGHLVKAAVELAKDWRTDRMLRRLEALLAVANESDSLIITGNGDVIQPENDLIAIGSGGPYAQSAARALLENTELGAREIVEKALGIAGDICIYTNQFHTIEELTSKAKDPENV.

The active site involves threonine 2. Na(+)-binding residues include glycine 157, cysteine 160, and threonine 163.

It belongs to the peptidase T1B family. HslV subfamily. A double ring-shaped homohexamer of HslV is capped on each side by a ring-shaped HslU homohexamer. The assembly of the HslU/HslV complex is dependent on binding of ATP.

Its subcellular location is the cytoplasm. It carries out the reaction ATP-dependent cleavage of peptide bonds with broad specificity.. With respect to regulation, allosterically activated by HslU binding. Functionally, protease subunit of a proteasome-like degradation complex believed to be a general protein degrading machinery. This is ATP-dependent protease subunit HslV from Sodalis glossinidius (strain morsitans).